The following is a 364-amino-acid chain: MPDNSSIANCCAASGLAARPSWPGSAEAEPPETPRAPWVAPMLSTVVIVTTAVDFVGNLLVILSVLRNRKLRNAGNLFVVNLALADLVVALYPYPLILVAILHDGWVLGEIHCKASAFVMGLSVIGSVFNITAIAINRYWCICHSATYHRACSQWHAPLYISLIWLLTLVALVPNFFVGSLEYDPRIYSCTFIQTASTQYTMAVVAIHFLLPIAVVSFCYLRIWILVLQARRKAKAERKLRLRPSDLRSFLTMFAVFVVFAICWAPLNCIGLAVAINPEAMALQIPEGLFVTSYFLAYFNSCLNAIVYGLLNQNFRREYKRILSALWSTGRCFHDASKCHLTEDLQGPVPPAAMATIPVQEGAL.

Positions 1-28 are cleaved as a signal peptide; it reads MPDNSSIANCCAASGLAARPSWPGSAEA. Residues 29–45 lie on the Extracellular side of the membrane; it reads EPPETPRAPWVAPMLST. Residues 46-66 form a helical membrane-spanning segment; that stretch reads VVIVTTAVDFVGNLLVILSVL. At 67 to 81 the chain is on the cytoplasmic side; the sequence is RNRKLRNAGNLFVVN. The helical transmembrane segment at 82-102 threads the bilayer; that stretch reads LALADLVVALYPYPLILVAIL. The Extracellular segment spans residues 103–115; the sequence is HDGWVLGEIHCKA. A disulfide bridge connects residues Cys113 and Cys190. A helical transmembrane segment spans residues 116 to 136; it reads SAFVMGLSVIGSVFNITAIAI. Over 137-158 the chain is Cytoplasmic; that stretch reads NRYWCICHSATYHRACSQWHAP. Residues 159–179 form a helical membrane-spanning segment; that stretch reads LYISLIWLLTLVALVPNFFVG. At 180–200 the chain is on the extracellular side; that stretch reads SLEYDPRIYSCTFIQTASTQY. The helical transmembrane segment at 201–221 threads the bilayer; sequence TMAVVAIHFLLPIAVVSFCYL. Residues 222–255 lie on the Cytoplasmic side of the membrane; sequence RIWILVLQARRKAKAERKLRLRPSDLRSFLTMFA. Residues 256 to 276 form a helical membrane-spanning segment; sequence VFVVFAICWAPLNCIGLAVAI. Residues 277 to 287 lie on the Extracellular side of the membrane; it reads NPEAMALQIPE. The chain crosses the membrane as a helical span at residues 288–308; it reads GLFVTSYFLAYFNSCLNAIVY. Topologically, residues 309–364 are cytoplasmic; it reads GLLNQNFRREYKRILSALWSTGRCFHDASKCHLTEDLQGPVPPAAMATIPVQEGAL.

It belongs to the G-protein coupled receptor 1 family. As to expression, expressed in the hippocampus, kidney, and ovary.

The protein localises to the cell membrane. High affinity receptor for melatonin. The activity of this receptor is mediated by pertussis toxin sensitive G proteins that inhibits adenylate cyclase activity. The chain is Melatonin receptor type 1B from Rattus norvegicus (Rat).